A 541-amino-acid chain; its full sequence is Membrane protein insertase YidC (541 aa).

6 helical membrane-spanning segments follow: residues 6–26, 325–345, 349–369, 420–440, 457–477, and 500–520; these read NILL…WQAD, LVVD…LLMF, FVGN…GLLF, GGCL…WVLL, LSVQ…MFVM, and VIFT…WLVG.

This sequence belongs to the OXA1/ALB3/YidC family. Type 1 subfamily. As to quaternary structure, interacts with the Sec translocase complex via SecD. Specifically interacts with transmembrane segments of nascent integral membrane proteins during membrane integration.

It localises to the cell inner membrane. In terms of biological role, required for the insertion and/or proper folding and/or complex formation of integral membrane proteins into the membrane. Involved in integration of membrane proteins that insert both dependently and independently of the Sec translocase complex, as well as at least some lipoproteins. Aids folding of multispanning membrane proteins. This Shewanella baltica (strain OS223) protein is Membrane protein insertase YidC.